The sequence spans 241 residues: Probable transcriptional regulatory protein lmo1535 (241 aa).

Residues 1–14 are compositionally biased toward polar residues; the sequence is MSGHSKWNNIQGRK. Residues 1–22 are disordered; it reads MSGHSKWNNIQGRKNAQDSKRS.

Belongs to the TACO1 family.

Its subcellular location is the cytoplasm. The protein is Probable transcriptional regulatory protein lmo1535 of Listeria monocytogenes serovar 1/2a (strain ATCC BAA-679 / EGD-e).